Reading from the N-terminus, the 372-residue chain is 4-hydroxy-3-methylbut-2-en-1-yl diphosphate synthase (flavodoxin) (372 aa).

The [4Fe-4S] cluster site is built by C270, C273, C305, and E312.

Belongs to the IspG family. The cofactor is [4Fe-4S] cluster.

It catalyses the reaction (2E)-4-hydroxy-3-methylbut-2-enyl diphosphate + oxidized [flavodoxin] + H2O + 2 H(+) = 2-C-methyl-D-erythritol 2,4-cyclic diphosphate + reduced [flavodoxin]. The protein operates within isoprenoid biosynthesis; isopentenyl diphosphate biosynthesis via DXP pathway; isopentenyl diphosphate from 1-deoxy-D-xylulose 5-phosphate: step 5/6. Its function is as follows. Converts 2C-methyl-D-erythritol 2,4-cyclodiphosphate (ME-2,4cPP) into 1-hydroxy-2-methyl-2-(E)-butenyl 4-diphosphate. This chain is 4-hydroxy-3-methylbut-2-en-1-yl diphosphate synthase (flavodoxin), found in Marinobacter nauticus (strain ATCC 700491 / DSM 11845 / VT8) (Marinobacter aquaeolei).